Consider the following 222-residue polypeptide: Charged multivesicular body protein 4b (222 aa).

Disordered regions lie at residues Met1–Gln21 and Gly183–Ala222. Residues Gln21–Gln182 are a coiled coil. Positions Pro188 to Lys200 are enriched in low complexity.

It belongs to the SNF7 family. In terms of assembly, probable core component of the endosomal sorting required for transport complex III (ESCRT-III). ESCRT-III components are thought to multimerize to form a flat lattice on the perimeter membrane of the endosome.

It localises to the cytoplasm. The protein localises to the cytosol. It is found in the late endosome membrane. The protein resides in the midbody. Functionally, probable core component of the endosomal sorting required for transport complex III (ESCRT-III) which is involved in multivesicular bodies (MVBs) formation and sorting of endosomal cargo proteins into MVBs. MVBs contain intraluminal vesicles (ILVs) that are generated by invagination and scission from the limiting membrane of the endosome and mostly are delivered to lysosomes enabling degradation of membrane proteins, such as stimulated growth factor receptors, lysosomal enzymes and lipids. The protein is Charged multivesicular body protein 4b (chmp4b) of Xenopus tropicalis (Western clawed frog).